The chain runs to 252 residues: Type III pantothenate kinase (252 aa).

6–13 provides a ligand contact to ATP; the sequence is DIGNTSTA. A substrate-binding site is contributed by 104-107; the sequence is GADR. Catalysis depends on aspartate 106, which acts as the Proton acceptor. Residue aspartate 128 coordinates K(+). Position 131 (threonine 131) interacts with ATP. Threonine 183 contacts substrate.

This sequence belongs to the type III pantothenate kinase family. As to quaternary structure, homodimer. The cofactor is NH4(+). Requires K(+) as cofactor.

It is found in the cytoplasm. It carries out the reaction (R)-pantothenate + ATP = (R)-4'-phosphopantothenate + ADP + H(+). Its pathway is cofactor biosynthesis; coenzyme A biosynthesis; CoA from (R)-pantothenate: step 1/5. Functionally, catalyzes the phosphorylation of pantothenate (Pan), the first step in CoA biosynthesis. The sequence is that of Type III pantothenate kinase from Thermus thermophilus (strain ATCC BAA-163 / DSM 7039 / HB27).